The following is a 76-amino-acid chain: Large ribosomal subunit protein eL20 (76 aa).

The protein belongs to the eukaryotic ribosomal protein eL20 family. As to quaternary structure, part of the 50S ribosomal subunit. Binds 23S rRNA.

The polypeptide is Large ribosomal subunit protein eL20 (Methanococcus vannielii (strain ATCC 35089 / DSM 1224 / JCM 13029 / OCM 148 / SB)).